Here is a 129-residue protein sequence, read N- to C-terminus: Transcription antitermination protein NusB (129 aa).

It belongs to the NusB family.

Involved in transcription antitermination. Required for transcription of ribosomal RNA (rRNA) genes. Binds specifically to the boxA antiterminator sequence of the ribosomal RNA (rrn) operons. The protein is Transcription antitermination protein NusB of Staphylococcus aureus (strain bovine RF122 / ET3-1).